Reading from the N-terminus, the 911-residue chain is Valine--tRNA ligase (911 aa).

Residues 57 to 67 (PTVSGSLHVGH) carry the 'HIGH' region motif. A 'KMSKS' region motif is present at residues 599-603 (KMSKS). Lys602 contacts ATP. Residues 882–911 (EESAAEDAPETEVAVEASELGEPPVKKPKH) form a disordered region.

This sequence belongs to the class-I aminoacyl-tRNA synthetase family. ValS type 2 subfamily. Monomer.

It localises to the cytoplasm. The enzyme catalyses tRNA(Val) + L-valine + ATP = L-valyl-tRNA(Val) + AMP + diphosphate. Functionally, catalyzes the attachment of valine to tRNA(Val). As ValRS can inadvertently accommodate and process structurally similar amino acids such as threonine, to avoid such errors, it has a 'posttransfer' editing activity that hydrolyzes mischarged Thr-tRNA(Val) in a tRNA-dependent manner. The polypeptide is Valine--tRNA ligase (Bifidobacterium longum subsp. infantis (strain ATCC 15697 / DSM 20088 / JCM 1222 / NCTC 11817 / S12)).